The sequence spans 244 residues: 1-(5-phosphoribosyl)-5-[(5-phosphoribosylamino)methylideneamino] imidazole-4-carboxamide isomerase (244 aa).

Asp10 serves as the catalytic Proton acceptor. Residue Asp132 is the Proton donor of the active site.

This sequence belongs to the HisA/HisF family.

It is found in the cytoplasm. The catalysed reaction is 1-(5-phospho-beta-D-ribosyl)-5-[(5-phospho-beta-D-ribosylamino)methylideneamino]imidazole-4-carboxamide = 5-[(5-phospho-1-deoxy-D-ribulos-1-ylimino)methylamino]-1-(5-phospho-beta-D-ribosyl)imidazole-4-carboxamide. It participates in amino-acid biosynthesis; L-histidine biosynthesis; L-histidine from 5-phospho-alpha-D-ribose 1-diphosphate: step 4/9. The polypeptide is 1-(5-phosphoribosyl)-5-[(5-phosphoribosylamino)methylideneamino] imidazole-4-carboxamide isomerase (Stenotrophomonas maltophilia (strain K279a)).